The primary structure comprises 133 residues: MTSTFALVLLLGGMAVCVATGVFGGYSERANHQANPEFLNLAHYATSTWSAQQPGKTHFDTVAEVVKVETQVVAGTNYRLTLKVAESTCELTSTYNKDTCLPKADAAHRTCTTVVFENLQGDKSVSPFECEAA.

A signal peptide spans 1–19 (MTSTFALVLLLGGMAVCVA). One can recognise a Cystatin domain in the interval 30–118 (ANHQANPEFL…RTCTTVVFEN (89 aa)). 2 disulfide bridges follow: Cys89-Cys100 and Cys111-Cys130.

The protein belongs to the cystatin family. As to quaternary structure, monomer. Can form homodimers in vitro, but probably not in vivo. Homodimers are predicted to be inactive; dimerization disrupts the interaction with target proteases. Detected in saliva (at protein level). Detected in salivary gland and midgut.

It localises to the secreted. In terms of biological role, contributes to the suppression of the host's immune response to tick salivary proteins and is important for successful feeding on hosts. Inhibitor of cysteine proteinases. Inhibits host papain and cathepsin L (CTSL) (in vitro). Inhibits host cathepsin S (CTSS) (in vitro). Inhibits host CTSV and CTSC, but to a lesser degree (in vitro). Inhibits host immune responses via its inhibition of host cathepsins. Inhibits differentiation of host dendritic cells. Inhibits proliferation of host T-cells in response to antigen stimulus. Down-regulates IL1B production by host mast cells, and this then leads to impaired activation of IL1R1, resulting in decreased IL9 production. Inhibits host inflammatory reactions and recruitment of host neutrophils. Attenuates IFN-beta (IFNB1)-triggered JAK/STAT signaling pathway in mouse dendritic cells. Functionally, (Microbial infection) Down-regulates TLR2-mediated host responses to infection by Borrelia burgdorferi and the production of the chemokine CCL3 by host dendritic cells. Down-regulates host responses to infection by B.burgdorferi and the production of IFNB1 by host dendritic cells. This Ixodes scapularis (Black-legged tick) protein is Salivary cystatin-L.